A 440-amino-acid polypeptide reads, in one-letter code: Cytochrome b (440 aa).

The chain crosses the membrane as a helical span at residues 46-66 (IWGIVLAFCLVLQIATGIVLV). Positions 97 and 111 each coordinate heme b. Helical transmembrane passes span 100–120 (GASL…YYGS), 129–149 (WIVG…GYVL), 156–176 (FWGA…GEAI), 194–214 (FFSL…VHIW), 253–273 (LFAL…MPNY), 296–315 (WYFL…VWVV), 330–350 (FFGV…PWLD), 365–385 (WWFW…AMPA), and 394–414 (LAGS…LGII). Positions 198 and 212 each coordinate heme b.

Belongs to the cytochrome b family. The main subunits of complex b-c1 are: cytochrome b, cytochrome c1 and the Rieske protein. Heme b serves as cofactor.

Its subcellular location is the cell membrane. Its function is as follows. Component of the ubiquinol-cytochrome c reductase complex (complex III or cytochrome b-c1 complex), which is a respiratory chain that generates an electrochemical potential coupled to ATP synthesis. The protein is Cytochrome b (petB) of Paracoccus denitrificans.